The primary structure comprises 476 residues: Angiotensinogen (476 aa).

Positions 1–24 are cleaved as a signal peptide; the sequence is MAPAGLSLGATILCLLAWAGLAAG. The cysteines at positions 42 and 161 are disulfide-linked. The tract at residues 45-64 is disordered; the sequence is LEKPSVETPADPTLTPVPIQ. N-linked (GlcNAc...) asparagine glycosylation is present at Asn-295.

It belongs to the serpin family. In response to low blood pressure, the enzyme renin/REN cleaves angiotensinogen to produce angiotensin-1. Angiotensin-1 is a substrate of ACE (angiotensin converting enzyme) that removes a dipeptide to yield the physiologically active peptide angiotensin-2. Angiotensin-1 and angiotensin-2 can be further processed to generate angiotensin-3, angiotensin-4. Angiotensin 1-9 is cleaved from angiotensin-1 by ACE2 and can be further processed by ACE to produce angiotensin 1-7, angiotensin 1-5 and angiotensin 1-4. Angiotensin 1-7 has also been proposed to be cleaved from angiotensin-2 by ACE2 or from angiotensin-1 by MME (neprilysin). In terms of processing, the disulfide bond is labile. Angiotensinogen is present in the circulation in a near 40:60 ratio with the oxidized disulfide-bonded form, which preferentially interacts with receptor-bound renin.

It is found in the secreted. Its function is as follows. Essential component of the renin-angiotensin system (RAS), a potent regulator of blood pressure, body fluid and electrolyte homeostasis. Acts directly on vascular smooth muscle as a potent vasoconstrictor, affects cardiac contractility and heart rate through its action on the sympathetic nervous system, and alters renal sodium and water absorption through its ability to stimulate the zona glomerulosa cells of the adrenal cortex to synthesize and secrete aldosterone. Acts by binding to angiotensin receptors AGTR1 and AGTR2. Also binds the DEAR/FBXW7-AS1 receptor. In terms of biological role, stimulates aldosterone release. Functionally, is a ligand for the G-protein coupled receptor MAS1. Has vasodilator and antidiuretic effects. Has an antithrombotic effect that involves MAS1-mediated release of nitric oxide from platelets. The sequence is that of Angiotensinogen (AGT) from Ovis aries (Sheep).